The sequence spans 239 residues: MRYDKELTENEMIRQKILQQLLEWIECNLEHPISIEDIAQKSGYSRRNIQLLFRNFMHVPLGEYIRKRRLCRAAILVRLTAKSMLDIALSLHFDSQQSFSREFKKLFGCSPREYRHRDYWDLANIFPSFLIRQQQKTECRLINFPETPIFGNSFKYDIEVSNKSPDEEVKLRRHHLARCMKNFKTDIYFVSTFEPSTKSVDLLTVETFAGTVCEYADMPKEWTTTRGLYDPTHVIWTQA.

Residues 19–117 (QQLLEWIECN…GCSPREYRHR (99 aa)) form the HTH araC/xylS-type domain. 2 DNA-binding regions (H-T-H motif) span residues 36-57 (EDIA…RNFM) and 84-107 (MLDI…KKLF).

This Escherichia coli (strain K12) protein is Putative HTH-type transcriptional regulator YkgA (ykgA).